Consider the following 210-residue polypeptide: Uracil phosphoribosyltransferase (210 aa).

Residues R78, R103, and D130–T138 contribute to the 5-phospho-alpha-D-ribose 1-diphosphate site. Uracil contacts are provided by residues I193 and G198–A200. D199 serves as a coordination point for 5-phospho-alpha-D-ribose 1-diphosphate.

The protein belongs to the UPRTase family. Mg(2+) is required as a cofactor.

The catalysed reaction is UMP + diphosphate = 5-phospho-alpha-D-ribose 1-diphosphate + uracil. The protein operates within pyrimidine metabolism; UMP biosynthesis via salvage pathway; UMP from uracil: step 1/1. Its activity is regulated as follows. Allosterically activated by GTP. Functionally, catalyzes the conversion of uracil and 5-phospho-alpha-D-ribose 1-diphosphate (PRPP) to UMP and diphosphate. In Xanthomonas axonopodis pv. citri (strain 306), this protein is Uracil phosphoribosyltransferase.